The chain runs to 43 residues: uncharacterized protein (43 aa).

This is an uncharacterized protein from Rickettsia prowazekii (strain Madrid E).